Here is a 128-residue protein sequence, read N- to C-terminus: Prokineticin-2 (128 aa).

The N-terminal stretch at 1–26 is a signal peptide; the sequence is MGDPRCAPLLLLLLLPLLFTPPAGDA. 5 cysteine pairs are disulfide-bonded: C33/C45, C39/C57, C44/C106, C67/C114, and C108/C124.

The protein belongs to the AVIT (prokineticin) family. Expressed in the SCN and among a few other discrete brain areas, including the islands of Calleja, media l preoptic area of the hypothalamus and the shell of the nucleus accumbens. Highly expressed in testis. In the SCN, expression subjected to high amplitude of circadian oscillation.

The protein localises to the secreted. Its function is as follows. May function as an output molecule from the suprachiasmatic nucleus (SCN) that transmits behavioral circadian rhythm. May also function locally within the SCN to synchronize output. Potently contracts gastrointestinal (GI) smooth muscle. The chain is Prokineticin-2 (Prok2) from Mus musculus (Mouse).